The sequence spans 212 residues: Pyridoxine/pyridoxamine 5'-phosphate oxidase (212 aa).

Substrate-binding positions include 8–11 (RREY) and lysine 66. Residues 61 to 66 (RIVLLK), 76 to 77 (FT), arginine 82, lysine 83, and glutamine 105 contribute to the FMN site. Positions 123, 127, and 131 each coordinate substrate. FMN is bound by residues 140–141 (QS) and tryptophan 185. 191–193 (RLH) contacts substrate. Arginine 195 contacts FMN.

Belongs to the pyridoxamine 5'-phosphate oxidase family. As to quaternary structure, homodimer. The cofactor is FMN.

It catalyses the reaction pyridoxamine 5'-phosphate + O2 + H2O = pyridoxal 5'-phosphate + H2O2 + NH4(+). It carries out the reaction pyridoxine 5'-phosphate + O2 = pyridoxal 5'-phosphate + H2O2. Its pathway is cofactor metabolism; pyridoxal 5'-phosphate salvage; pyridoxal 5'-phosphate from pyridoxamine 5'-phosphate: step 1/1. It functions in the pathway cofactor metabolism; pyridoxal 5'-phosphate salvage; pyridoxal 5'-phosphate from pyridoxine 5'-phosphate: step 1/1. Functionally, catalyzes the oxidation of either pyridoxine 5'-phosphate (PNP) or pyridoxamine 5'-phosphate (PMP) into pyridoxal 5'-phosphate (PLP). The chain is Pyridoxine/pyridoxamine 5'-phosphate oxidase from Shewanella sp. (strain MR-4).